The primary structure comprises 228 residues: Death domain-containing membrane protein NRADD (228 aa).

Over Met1–Asn52 the chain is Extracellular. N-linked (GlcNAc...) asparagine glycosylation is found at Asn4 and Asn37. A helical; Signal-anchor for type III membrane protein membrane pass occupies residues Ile53–Ala73. The Cytoplasmic portion of the chain corresponds to Phe74 to Val228. The segment at Ala87–Ser122 is disordered. Basic and acidic residues predominate over residues Arg90–Asp105. Residues Glu143–Ala222 form the Death domain.

In terms of assembly, interacts with NGFR. Interacts with NTRK1. Interacts with SORT1. In terms of tissue distribution, detected in lung and testis.

The protein localises to the cell membrane. It is found in the nucleus. In terms of biological role, modulates NTRK1 signaling. Can activate several intracellular signaling pathways, leading to activation of JUN. Promotes apoptosis. Promotes translocation of SORT1 to the cell membrane, and thereby hinders lysosomal degradation of SOTR1 and promotes its interaction with NGFR. The protein is Death domain-containing membrane protein NRADD (Nradd) of Mus musculus (Mouse).